The primary structure comprises 101 residues: NAD(P)H-quinone oxidoreductase subunit 4L (101 aa).

3 consecutive transmembrane segments (helical) span residues 3–23, 30–50, and 64–84; these read LRYF…GLIT, VLMS…AFSN, and VFVI…VLAI.

The protein belongs to the complex I subunit 4L family. In terms of assembly, NDH-1 can be composed of about 15 different subunits; different subcomplexes with different compositions have been identified which probably have different functions.

The protein resides in the cellular thylakoid membrane. The enzyme catalyses a plastoquinone + NADH + (n+1) H(+)(in) = a plastoquinol + NAD(+) + n H(+)(out). It carries out the reaction a plastoquinone + NADPH + (n+1) H(+)(in) = a plastoquinol + NADP(+) + n H(+)(out). NDH-1 shuttles electrons from an unknown electron donor, via FMN and iron-sulfur (Fe-S) centers, to quinones in the respiratory and/or the photosynthetic chain. The immediate electron acceptor for the enzyme in this species is believed to be plastoquinone. Couples the redox reaction to proton translocation, and thus conserves the redox energy in a proton gradient. Cyanobacterial NDH-1 also plays a role in inorganic carbon-concentration. This is NAD(P)H-quinone oxidoreductase subunit 4L from Nostoc sp. (strain PCC 7120 / SAG 25.82 / UTEX 2576).